Here is a 789-residue protein sequence, read N- to C-terminus: Mediator of RNA polymerase II transcription subunit 15 (789 aa).

Residues 9 to 73 form an interaction with SREBF1 region; it reads DWRSAAFRQK…IHFRDIHNKK (65 aa). Disordered regions lie at residues 88-140 and 257-326; these read LTGG…APHG and QQQA…PLVS. The segment covering 89–102 has biased composition (low complexity); that stretch reads TGGPTPGAAGIGMP. Residues 108 to 118 are compositionally biased toward gly residues; it reads QSLGGMGGLGA. Composition is skewed to low complexity over residues 257 to 274, 282 to 291, and 302 to 326; these read QQQALQAQPPMQQPSMQQ, ALPQQLSQLH, and AQQSPIAQNQPPQIPPQSQSQPLVS. Position 347 is an asymmetric dimethylarginine (Arg-347). A disordered region spans residues 404–531; that stretch reads RFPPTSTMSA…PAGSSQAEEQ (128 aa). Positions 407 to 426 are enriched in polar residues; the sequence is PTSTMSAGPSSSISLGGQPT. A compositionally biased stretch (low complexity) spans 427-450; sequence TQVSQSSLTMLSSPSPGQQVQTPQ. The segment covering 451 to 463 has biased composition (pro residues); it reads SMPPPPQPSPQPG. Positions 464-483 are enriched in low complexity; sequence SQPNSNVSSGPAPSPSSFLP. 2 stretches are compositionally biased toward polar residues: residues 494–504 and 512–530; these read VTARTPQNFSV and TPVNPSSVMSPAGSSQAEE. Residues 548–565 carry the Nuclear localization signal motif; that stretch reads RRMINKIDKNEDRKKDLS. Thr-604 is modified (phosphothreonine).

This sequence belongs to the Mediator complex subunit 15 family. Component of the Mediator complex, which is composed of MED1, MED4, MED6, MED7, MED8, MED9, MED10, MED11, MED12, MED13, MED13L, MED14, MED15, MED16, MED17, MED18, MED19, MED20, MED21, MED22, MED23, MED24, MED25, MED26, MED27, MED29, MED30, MED31, CCNC, CDK8 and CDC2L6/CDK11. The MED12, MED13, CCNC and CDK8 subunits form a distinct module termed the CDK8 module. Mediator containing the CDK8 module is less active than Mediator lacking this module in supporting transcriptional activation. Individual preparations of the Mediator complex lacking one or more distinct subunits have been variously termed ARC, CRSP, DRIP, PC2, SMCC and TRAP. Interacts with SMAD2, SMAD3, SREBF1 and SREBF2. Interacts with WWTR1. Interacts with TRIM11. In terms of processing, ubiquitinated by TRIM11, leading to proteasomal degradation.

The protein localises to the cytoplasm. It localises to the nucleus. Its function is as follows. Component of the Mediator complex, a coactivator involved in the regulated transcription of nearly all RNA polymerase II-dependent genes. Mediator functions as a bridge to convey information from gene-specific regulatory proteins to the basal RNA polymerase II transcription machinery. Mediator is recruited to promoters by direct interactions with regulatory proteins and serves as a scaffold for the assembly of a functional preinitiation complex with RNA polymerase II and the general transcription factors. Required for cholesterol-dependent gene regulation. Positively regulates the Nodal signaling pathway. This chain is Mediator of RNA polymerase II transcription subunit 15 (Med15), found in Mus musculus (Mouse).